The following is a 279-amino-acid chain: Biotin synthase (279 aa).

A Radical SAM core domain is found at 2–228; sequence KTIMLCAISS…NARIMIAGGR (227 aa). Residues Cys-17, Cys-21, and Cys-24 each coordinate [4Fe-4S] cluster. 4 residues coordinate [2Fe-2S] cluster: Cys-61, Cys-96, Cys-154, and Arg-221.

It belongs to the radical SAM superfamily. Biotin synthase family. Homodimer. [4Fe-4S] cluster serves as cofactor. It depends on [2Fe-2S] cluster as a cofactor.

It carries out the reaction (4R,5S)-dethiobiotin + (sulfur carrier)-SH + 2 reduced [2Fe-2S]-[ferredoxin] + 2 S-adenosyl-L-methionine = (sulfur carrier)-H + biotin + 2 5'-deoxyadenosine + 2 L-methionine + 2 oxidized [2Fe-2S]-[ferredoxin]. It participates in cofactor biosynthesis; biotin biosynthesis; biotin from 7,8-diaminononanoate: step 2/2. In terms of biological role, catalyzes the conversion of dethiobiotin (DTB) to biotin by the insertion of a sulfur atom into dethiobiotin via a radical-based mechanism. This Campylobacter curvus (strain 525.92) protein is Biotin synthase.